Reading from the N-terminus, the 224-residue chain is Putative O-methyltransferase MLBr01075 (224 aa).

Residues Val51, Glu73, 75 to 76, Ser81, Asp99, and Ile100 each bind S-adenosyl-L-methionine; that span reads GT. A substrate-binding site is contributed by Asp147. Asp149 lines the S-adenosyl-L-methionine pocket.

Belongs to the class I-like SAM-binding methyltransferase superfamily. Cation-dependent O-methyltransferase family.

The polypeptide is Putative O-methyltransferase MLBr01075 (Mycobacterium leprae (strain Br4923)).